We begin with the raw amino-acid sequence, 342 residues long: N-acetyl-gamma-glutamyl-phosphate reductase (342 aa).

The active site involves cysteine 149.

Belongs to the NAGSA dehydrogenase family. Type 1 subfamily.

It localises to the cytoplasm. It carries out the reaction N-acetyl-L-glutamate 5-semialdehyde + phosphate + NADP(+) = N-acetyl-L-glutamyl 5-phosphate + NADPH + H(+). The protein operates within amino-acid biosynthesis; L-arginine biosynthesis; N(2)-acetyl-L-ornithine from L-glutamate: step 3/4. Catalyzes the NADPH-dependent reduction of N-acetyl-5-glutamyl phosphate to yield N-acetyl-L-glutamate 5-semialdehyde. This is N-acetyl-gamma-glutamyl-phosphate reductase from Nitrosospira multiformis (strain ATCC 25196 / NCIMB 11849 / C 71).